We begin with the raw amino-acid sequence, 146 residues long: Anti-sigma F factor (146 aa).

This sequence belongs to the anti-sigma-factor family.

The catalysed reaction is L-seryl-[protein] + ATP = O-phospho-L-seryl-[protein] + ADP + H(+). It carries out the reaction L-threonyl-[protein] + ATP = O-phospho-L-threonyl-[protein] + ADP + H(+). In terms of biological role, binds to sigma F and blocks its ability to form an RNA polymerase holoenzyme (E-sigma F). Phosphorylates SpoIIAA on a serine residue. This phosphorylation may enable SpoIIAA to act as an anti-anti-sigma factor that counteracts SpoIIAB and thus releases sigma F from inhibition. The chain is Anti-sigma F factor from Bacillus anthracis (strain A0248).